We begin with the raw amino-acid sequence, 223 residues long: MKSIIPPQNLSELLKRANMMAGISLAQIATHRGINVPNNLKRDKGWVGQLIEMELGATAGSKPEQDFLHLGVELKTIPIDNHGKPLETTYVCVAPLTNIEGLTWQNSLVCHKLQRVLWVPVEGERHIPVGERRIGTPTLWEPDPQEQALLQQDWEEIMELIALGKVEKLTARHGEVLQLRPKAANSKAMTHSISEDGSLKMTNPRGFYLKTAFTAMILNKVFG.

Belongs to the MutH family.

It is found in the cytoplasm. Its function is as follows. Sequence-specific endonuclease that cleaves unmethylated GATC sequences. It is involved in DNA mismatch repair. This is DNA mismatch repair protein MutH from Shewanella oneidensis (strain ATCC 700550 / JCM 31522 / CIP 106686 / LMG 19005 / NCIMB 14063 / MR-1).